A 468-amino-acid chain; its full sequence is Siroheme synthase 1 (468 aa).

The precorrin-2 dehydrogenase /sirohydrochlorin ferrochelatase stretch occupies residues 1–204; sequence MDYLPIFCRL…GDKASANQLA (204 aa). Residues 22–23 and 43–44 contribute to the NAD(+) site; these read EV and PA. Ser-128 is modified (phosphoserine). Residues 216–468 form a uroporphyrinogen-III C-methyltransferase region; the sequence is GEVILVGAGP…NHGVQAAALA (253 aa). S-adenosyl-L-methionine is bound at residue Pro-225. Residue Asp-248 is the Proton acceptor of the active site. Lys-270 functions as the Proton donor in the catalytic mechanism. S-adenosyl-L-methionine-binding positions include 301–303, Ile-306, 331–332, Met-383, and Gly-412; these read GGD and TA.

It in the N-terminal section; belongs to the precorrin-2 dehydrogenase / sirohydrochlorin ferrochelatase family. The protein in the C-terminal section; belongs to the precorrin methyltransferase family.

The enzyme catalyses uroporphyrinogen III + 2 S-adenosyl-L-methionine = precorrin-2 + 2 S-adenosyl-L-homocysteine + H(+). It carries out the reaction precorrin-2 + NAD(+) = sirohydrochlorin + NADH + 2 H(+). The catalysed reaction is siroheme + 2 H(+) = sirohydrochlorin + Fe(2+). It participates in cofactor biosynthesis; adenosylcobalamin biosynthesis; precorrin-2 from uroporphyrinogen III: step 1/1. The protein operates within cofactor biosynthesis; adenosylcobalamin biosynthesis; sirohydrochlorin from precorrin-2: step 1/1. It functions in the pathway porphyrin-containing compound metabolism; siroheme biosynthesis; precorrin-2 from uroporphyrinogen III: step 1/1. Its pathway is porphyrin-containing compound metabolism; siroheme biosynthesis; siroheme from sirohydrochlorin: step 1/1. It participates in porphyrin-containing compound metabolism; siroheme biosynthesis; sirohydrochlorin from precorrin-2: step 1/1. Its function is as follows. Multifunctional enzyme that catalyzes the SAM-dependent methylations of uroporphyrinogen III at position C-2 and C-7 to form precorrin-2 via precorrin-1. Then it catalyzes the NAD-dependent ring dehydrogenation of precorrin-2 to yield sirohydrochlorin. Finally, it catalyzes the ferrochelation of sirohydrochlorin to yield siroheme. In Aeromonas salmonicida (strain A449), this protein is Siroheme synthase 1.